Reading from the N-terminus, the 368-residue chain is Chorismate synthase (368 aa).

Arg-46 is a binding site for NADP(+). FMN-binding positions include 124–126, Gly-284, 299–303, and Arg-326; these read RAS and KPTPS.

Belongs to the chorismate synthase family. FMNH2 serves as cofactor.

The enzyme catalyses 5-O-(1-carboxyvinyl)-3-phosphoshikimate = chorismate + phosphate. The protein operates within metabolic intermediate biosynthesis; chorismate biosynthesis; chorismate from D-erythrose 4-phosphate and phosphoenolpyruvate: step 7/7. Its function is as follows. Catalyzes the anti-1,4-elimination of the C-3 phosphate and the C-6 proR hydrogen from 5-enolpyruvylshikimate-3-phosphate (EPSP) to yield chorismate, which is the branch point compound that serves as the starting substrate for the three terminal pathways of aromatic amino acid biosynthesis. This reaction introduces a second double bond into the aromatic ring system. The chain is Chorismate synthase from Pyrobaculum aerophilum (strain ATCC 51768 / DSM 7523 / JCM 9630 / CIP 104966 / NBRC 100827 / IM2).